The chain runs to 358 residues: Pituitary-specific positive transcription factor 1 (358 aa).

Positions 5–12 (AFSADSFT) match the 9aaTAD motif. The disordered stretch occupies residues 164–195 (PAVLSEEPPLGGTKDLRLRSRPPDDPPDMDSP). Residues 177–187 (KDLRLRSRPPD) show a composition bias toward basic and acidic residues. The region spanning 192–266 (MDSPQIRELE…ILAKWLDEAE (75 aa)) is the POU-specific domain. The homeobox DNA-binding region spans 282–341 (KRKRRTTISLGAKEALERSFGEKIKPSSQEIVRMAEGLHLEKEVVRVWFCNRRQREKRVK).

This sequence belongs to the POU transcription factor family. Class-1 subfamily.

It is found in the nucleus. Its function is as follows. Transcription factor that activates growth hormone and prolactin genes. Specifically binds to the consensus sequence 5'-TAAAT-3'. This is Pituitary-specific positive transcription factor 1 (pou1f1) from Oncorhynchus mykiss (Rainbow trout).